The chain runs to 327 residues: uncharacterized protein (327 aa).

The first 23 residues, 1–23, serve as a signal peptide directing secretion; the sequence is MGGGRLPPLWLPLLIAWSEWGNC. N-linked (GlcNAc...) asparagine; by host glycans are attached at residues Asn144 and Asn239. The disordered stretch occupies residues 298–327; it reads EESEAAEETAAGEASAVAAAAVSEEEQRRE. A compositionally biased stretch (low complexity) spans 305–319; the sequence is ETAAGEASAVAAAAV.

This is an uncharacterized protein from Human cytomegalovirus (strain AD169) (HHV-5).